We begin with the raw amino-acid sequence, 777 residues long: Aminopeptidase P (777 aa).

A signal peptide spans 1 to 17; that stretch reads MQLNFLLFVFIFLMVFH. A substrate-binding site is contributed by His-551. Residues Asp-570 and Asp-581 each contribute to the Mn(2+) site. Residue His-640 coordinates substrate. A Mn(2+)-binding site is contributed by His-644. Residue His-653 coordinates substrate. Residues Glu-676 and Glu-690 each contribute to the Mn(2+) site.

Belongs to the peptidase M24B family. In terms of assembly, homodimer. The cofactor is Mn(2+). Post-translationally, the N-terminus may be proteolytically cleaved to generate a 73-kDa mature form.

It localises to the vacuole lumen. The protein localises to the cytoplasm. The enzyme catalyses Release of any N-terminal amino acid, including proline, that is linked to proline, even from a dipeptide or tripeptide.. Its activity is regulated as follows. Partially activated by Co(2+) and Mg(2+) has no effect. Inhibited by 1 mM Zn(2+), Ni(2+), or Cu(2+). Inhibited by apstatin, a non-hydrolysable peptide analog. Catalyzes the removal of a penultimate prolyl residue from the N-termini of peptides. In the food vacuole, involved in the final step of host hemoglobin catabolism, by cleaving hemoglobin-derived oligopeptides. In the cytoplasm, may be involved in the last steps of the turnover of ubiquitinated proteins. This Plasmodium falciparum (isolate 3D7) protein is Aminopeptidase P.